Reading from the N-terminus, the 162-residue chain is MIPGEYILSSESLTGNVGREAKTIEIINTGDRPVQIGSHFHFAEVNPSISFDRSEGYGFRLDIPSGTAVRLEPGDARTVNLVAIGGDRIVAGFRDLVDGPLEDLKVNVWEGREDGWRRSSAAGDAPQELPQVEAAERGRKLDDATDVDTNVGTEEGFEEGRN.

Residues 116–162 (WRRSSAAGDAPQELPQVEAAERGRKLDDATDVDTNVGTEEGFEEGRN) are disordered. Residues 134 to 143 (AAERGRKLDD) show a composition bias toward basic and acidic residues.

Belongs to the urease beta subunit family. In terms of assembly, heterotrimer of UreA (gamma), UreB (beta) and UreC (alpha) subunits. Three heterotrimers associate to form the active enzyme.

It localises to the cytoplasm. The enzyme catalyses urea + 2 H2O + H(+) = hydrogencarbonate + 2 NH4(+). Its pathway is nitrogen metabolism; urea degradation; CO(2) and NH(3) from urea (urease route): step 1/1. The protein is Urease subunit beta of Corynebacterium glutamicum (strain ATCC 13032 / DSM 20300 / JCM 1318 / BCRC 11384 / CCUG 27702 / LMG 3730 / NBRC 12168 / NCIMB 10025 / NRRL B-2784 / 534).